A 329-amino-acid chain; its full sequence is Tryptophan--tRNA ligase (329 aa).

Residues 9-11 (QPS) and 17-18 (GN) each bind ATP. The 'HIGH' region signature appears at 10–18 (PSGIPTIGN). Residue Asp133 coordinates L-tryptophan. Residues 145–147 (GDD), Val184, and 193–197 (KMSKS) each bind ATP. Residues 193–197 (KMSKS) carry the 'KMSKS' region motif.

The protein belongs to the class-I aminoacyl-tRNA synthetase family. Homodimer.

It localises to the cytoplasm. The catalysed reaction is tRNA(Trp) + L-tryptophan + ATP = L-tryptophyl-tRNA(Trp) + AMP + diphosphate + H(+). Functionally, catalyzes the attachment of tryptophan to tRNA(Trp). The protein is Tryptophan--tRNA ligase of Staphylococcus epidermidis (strain ATCC 35984 / DSM 28319 / BCRC 17069 / CCUG 31568 / BM 3577 / RP62A).